The sequence spans 161 residues: Nucleotide-binding protein swp_1151 (161 aa).

The protein belongs to the YajQ family.

Functionally, nucleotide-binding protein. The protein is Nucleotide-binding protein swp_1151 of Shewanella piezotolerans (strain WP3 / JCM 13877).